Consider the following 150-residue polypeptide: Flagellar assembly factor FliW (150 aa).

This sequence belongs to the FliW family. As to quaternary structure, interacts with translational regulator CsrA and flagellin(s).

The protein localises to the cytoplasm. Acts as an anti-CsrA protein, binds CsrA and prevents it from repressing translation of its target genes, one of which is flagellin. Binds to flagellin and participates in the assembly of the flagellum. This chain is Flagellar assembly factor FliW, found in Caldanaerobacter subterraneus subsp. tengcongensis (strain DSM 15242 / JCM 11007 / NBRC 100824 / MB4) (Thermoanaerobacter tengcongensis).